Consider the following 387-residue polypeptide: Putative glutamate--cysteine ligase 2 (387 aa).

This sequence belongs to the glutamate--cysteine ligase type 2 family. YbdK subfamily.

It carries out the reaction L-cysteine + L-glutamate + ATP = gamma-L-glutamyl-L-cysteine + ADP + phosphate + H(+). Functionally, ATP-dependent carboxylate-amine ligase which exhibits weak glutamate--cysteine ligase activity. In Pseudomonas fluorescens (strain ATCC BAA-477 / NRRL B-23932 / Pf-5), this protein is Putative glutamate--cysteine ligase 2.